A 200-amino-acid chain; its full sequence is ATP-dependent Clp protease proteolytic subunit (200 aa).

The Nucleophile role is filled by serine 103. The active site involves histidine 128.

It belongs to the peptidase S14 family. Fourteen ClpP subunits assemble into 2 heptameric rings which stack back to back to give a disk-like structure with a central cavity, resembling the structure of eukaryotic proteasomes.

It is found in the cytoplasm. The catalysed reaction is Hydrolysis of proteins to small peptides in the presence of ATP and magnesium. alpha-casein is the usual test substrate. In the absence of ATP, only oligopeptides shorter than five residues are hydrolyzed (such as succinyl-Leu-Tyr-|-NHMec, and Leu-Tyr-Leu-|-Tyr-Trp, in which cleavage of the -Tyr-|-Leu- and -Tyr-|-Trp bonds also occurs).. Cleaves peptides in various proteins in a process that requires ATP hydrolysis. Has a chymotrypsin-like activity. Plays a major role in the degradation of misfolded proteins. The chain is ATP-dependent Clp protease proteolytic subunit from Vibrio vulnificus (strain CMCP6).